A 348-amino-acid chain; its full sequence is Uroporphyrinogen decarboxylase (348 aa).

Residues 27–31 (RQAGR), phenylalanine 46, aspartate 76, tyrosine 152, serine 207, and histidine 320 contribute to the substrate site.

This sequence belongs to the uroporphyrinogen decarboxylase family. As to quaternary structure, homodimer.

The protein localises to the cytoplasm. It carries out the reaction uroporphyrinogen III + 4 H(+) = coproporphyrinogen III + 4 CO2. It functions in the pathway porphyrin-containing compound metabolism; protoporphyrin-IX biosynthesis; coproporphyrinogen-III from 5-aminolevulinate: step 4/4. In terms of biological role, catalyzes the decarboxylation of four acetate groups of uroporphyrinogen-III to yield coproporphyrinogen-III. This chain is Uroporphyrinogen decarboxylase, found in Bacillus cereus (strain AH820).